We begin with the raw amino-acid sequence, 569 residues long: Matrix metalloproteinase-21 (569 aa).

A signal peptide spans 1 to 24 (MLAASIFRPTLLLCWLAAPWPTQP). Residues 25–144 (ESLFHSRDRS…GPPPRARSRR (120 aa)) constitute a propeptide that is removed on maturation. The short motif at 115–122 (PRCGVPDM) is the Cysteine switch element. Residues 115–166 (PRCGVPDMRPPPPSAPPSPPGPPPRARSRRSPRAPLSLSRRGWQPRGYPDGG) are disordered. Residue Cys-117 participates in Zn(2+) binding. A compositionally biased stretch (pro residues) spans 122 to 139 (MRPPPPSAPPSPPGPPPR). A compositionally biased stretch (low complexity) spans 147 to 156 (RAPLSLSRRG). His-283 provides a ligand contact to Zn(2+). The active site involves Glu-284. Positions 287 and 293 each coordinate Zn(2+). Cys-329 and Cys-560 are disulfide-bonded. 4 Hemopexin repeats span residues 330 to 389 (EGSF…WPGI), 391 to 447 (THNI…FPGI), 448 to 496 (PSPL…FPAV), and 503 to 559 (FRNI…WFDV). A glycan (N-linked (GlcNAc...) asparagine) is linked at Asn-372.

This sequence belongs to the peptidase M10A family. Zn(2+) is required as a cofactor. It depends on Ca(2+) as a cofactor. Post-translationally, the precursor is cleaved by a furin endopeptidase. Identified in fetal brain, kidney and liver. In adult tissues found primarily in ovary, kidney, liver, lung, placenta, brain and peripheral blood leukocytes. Expressed as well in various cancer cell lines.

It localises to the secreted. Plays a specialized role in the generation of left-right asymmetry during embryogenesis. May act as a negative regulator of the NOTCH-signaling pathway. Cleaves alpha-1-antitrypsin. The sequence is that of Matrix metalloproteinase-21 (MMP21) from Homo sapiens (Human).